The sequence spans 80 residues: Raniseptin-2 (80 aa).

The first 22 residues, methionine 1–cysteine 22, serve as a signal peptide directing secretion. A propeptide spanning residues glutamate 23–glutamate 49 is cleaved from the precursor. Residues arginine 27–glutamate 46 form a disordered region. Residues glutamate 30–glutamate 44 are compositionally biased toward acidic residues.

The protein belongs to the frog skin active peptide (FSAP) family. Dermaseptin subfamily. In terms of tissue distribution, expressed by the skin glands.

Its subcellular location is the secreted. Functionally, has antibacterial activity. The polypeptide is Raniseptin-2 (Boana raniceps (Chaco tree frog)).